A 1331-amino-acid chain; its full sequence is Beta-mannanase/endoglucanase A (1331 aa).

The signal sequence occupies residues 1-41; that stretch reads MRLKTKIRKKWLSVLCTVVFLLNILFIANVTILPKVGAATS. Residues 42–325 are catalytic (mannanase); that stretch reads NDGVVKIDTS…YKTNAIGTSS (284 aa). The active-site Proton donor is the glutamate 162. Catalysis depends on glutamate 257, which acts as the Nucleophile. Disordered stretches follow at residues 319–363, 515–566, and 717–780; these read NAIG…TPAT, PSGA…TPAT, and EPSG…PLPT. Residues 323–335 show a composition bias toward low complexity; the sequence is TSSTPTPTSTVTP. Positions 363–516 constitute a CBM3 1 domain; that stretch reads TSGQIKVLYA…GVLVWGQEPS (154 aa). Composition is skewed to pro residues over residues 521 to 541 and 551 to 561; these read APAP…PTVT and TPTPTPTPTPV. Positions 566–719 constitute a CBM3 2 domain; the sequence is TGGQIKVLYA…GVLVWGQEPS (154 aa). Residues 721 to 735 are compositionally biased toward low complexity; sequence TTPSPTSTPTVTVTP. Composition is skewed to pro residues over residues 736–756 and 766–780; these read TPTP…PTVT and TPTP…PLPT. The interval 781–1331 is catalytic (endoglucanase); the sequence is ISPSPSVVEI…RNLVFMRALV (551 aa).

This sequence in the N-terminal section; belongs to the glycosyl hydrolase 5 (cellulase A) family. It in the C-terminal section; belongs to the glycosyl hydrolase 44 (cellulase J) family.

It catalyses the reaction Random hydrolysis of (1-&gt;4)-beta-D-mannosidic linkages in mannans, galactomannans and glucomannans.. The catalysed reaction is Endohydrolysis of (1-&gt;4)-beta-D-glucosidic linkages in cellulose, lichenin and cereal beta-D-glucans.. Degradation of hemicelluloses, the second most abundant polysaccharides in nature. Contains two catalytic domains with mannanase and endoglucanase activities. This Caldicellulosiruptor saccharolyticus (Caldocellum saccharolyticum) protein is Beta-mannanase/endoglucanase A (manA).